We begin with the raw amino-acid sequence, 1825 residues long: Proteasome activator complex subunit 4B (1825 aa).

6 HEAT repeats span residues 458 to 502, 981 to 1020, 1162 to 1200, 1336 to 1374, 1618 to 1656, and 1662 to 1700; these read PEGP…LVDC, NFCC…NHCG, YPLP…QLKR, DAFL…GSKH, PEQI…YNLF, and EQCV…CNFL. A bromodomain-like (BRDL) region spans residues 1632–1720; sequence AGSSSWHARY…EALCKTRLPK (89 aa).

It belongs to the BLM10 family. In terms of assembly, homodimer. Interacts with the 20S and 26S proteasomes.

It is found in the cytoplasm. It localises to the cytosol. The protein localises to the nucleus. The protein resides in the nucleus speckle. Its function is as follows. Associated component of the proteasome that specifically recognizes acetylated histones and promotes ATP- and ubiquitin-independent degradation of core histones during DNA damage response. Recognizes and binds acetylated histones via its bromodomain-like (BRDL) region and activates the proteasome by opening the gated channel for substrate entry. Binds to the core proteasome via its C-terminus, which occupies the same binding sites as the proteasomal ATPases, opening the closed structure of the proteasome via an active gating mechanism. involved in DNA damage response in somatic cells: binds to acetylated histones and promotes degradation of histones. The chain is Proteasome activator complex subunit 4B (psme4b) from Danio rerio (Zebrafish).